Consider the following 522-residue polypeptide: Peptide methionine sulfoxide reductase MsrA/MsrB (522 aa).

Residues 17-174 (LALGACSPKI…ALALIRNPNA (158 aa)) form the Thioredoxin domain. Cysteine 68 and cysteine 71 are oxidised to a cystine. Residues 199–354 (RTIYLAGGCF…PNGYCHIDIR (156 aa)) are peptide methionine sulfoxide reductase A. Cysteine 207 is a catalytic residue. In terms of domain architecture, MsrB spans 383 to 506 (DAELKRTLTE…NGASLKFIPL (124 aa)). Cysteine 440 and cysteine 495 are oxidised to a cystine. Cysteine 495 acts as the Nucleophile in catalysis.

The protein in the N-terminal section; belongs to the thioredoxin family. In the central section; belongs to the MsrA Met sulfoxide reductase family. It in the C-terminal section; belongs to the MsrB Met sulfoxide reductase family.

It catalyses the reaction L-methionyl-[protein] + [thioredoxin]-disulfide + H2O = L-methionyl-(S)-S-oxide-[protein] + [thioredoxin]-dithiol. It carries out the reaction [thioredoxin]-disulfide + L-methionine + H2O = L-methionine (S)-S-oxide + [thioredoxin]-dithiol. The catalysed reaction is L-methionyl-[protein] + [thioredoxin]-disulfide + H2O = L-methionyl-(R)-S-oxide-[protein] + [thioredoxin]-dithiol. In terms of biological role, has an important function as a repair enzyme for proteins that have been inactivated by oxidation. Catalyzes the reversible oxidation-reduction of methionine sulfoxide in proteins to methionine. The polypeptide is Peptide methionine sulfoxide reductase MsrA/MsrB (msrAB) (Neisseria gonorrhoeae).